We begin with the raw amino-acid sequence, 181 residues long: Peptide deformylase 1 (181 aa).

Residues cysteine 106 and histidine 148 each coordinate Fe cation. Glutamate 149 is a catalytic residue. Histidine 152 is a binding site for Fe cation.

The protein belongs to the polypeptide deformylase family. The cofactor is Fe(2+).

It catalyses the reaction N-terminal N-formyl-L-methionyl-[peptide] + H2O = N-terminal L-methionyl-[peptide] + formate. Functionally, removes the formyl group from the N-terminal Met of newly synthesized proteins. Requires at least a dipeptide for an efficient rate of reaction. N-terminal L-methionine is a prerequisite for activity but the enzyme has broad specificity at other positions. In Burkholderia multivorans (strain ATCC 17616 / 249), this protein is Peptide deformylase 1.